A 339-amino-acid polypeptide reads, in one-letter code: MSLELQEHCSLKPYNTFGIDVRARLLAHARDEADVREALALARERGLPLLVIGGGSNLLLTRDVEALVLRMASQGRRIVSDAADSVLVEAEAGEAWDPFVQWSLERGLAGLENLSLIPGTVGAAPMQNIGAYGVELKDVFDSLTALDRQDGTLREFDRQACRFGYRDSLFKQEPDRWLILRVRLRLTRRERLHLDYGPVRQRLEEEGIASPTARDVSRVICAIRREKLPDPAVLGNAGSFFKNPLVDATQAERLRQAFPDLVGYPQADGRLKLAAGWLIDKGGWKGFRDGPVGVHAQQALVLVNHGGATGAQVRALAERIQEDVRRRFGVELEPEPNLY.

Residues 18–189 enclose the FAD-binding PCMH-type domain; that stretch reads GIDVRARLLA…LRVRLRLTRR (172 aa). Arg-166 is an active-site residue. Ser-239 (proton donor) is an active-site residue. Residue Glu-335 is part of the active site.

This sequence belongs to the MurB family. FAD serves as cofactor.

The protein resides in the cytoplasm. It carries out the reaction UDP-N-acetyl-alpha-D-muramate + NADP(+) = UDP-N-acetyl-3-O-(1-carboxyvinyl)-alpha-D-glucosamine + NADPH + H(+). It participates in cell wall biogenesis; peptidoglycan biosynthesis. Functionally, cell wall formation. In Pseudomonas aeruginosa (strain ATCC 15692 / DSM 22644 / CIP 104116 / JCM 14847 / LMG 12228 / 1C / PRS 101 / PAO1), this protein is UDP-N-acetylenolpyruvoylglucosamine reductase.